We begin with the raw amino-acid sequence, 356 residues long: Thrombopoietin (356 aa).

The signal sequence occupies residues 1–21 (MELTDLLLAAMLLAVARLTLS). 2 cysteine pairs are disulfide-bonded: C28/C172 and C50/C106. N-linked (GlcNAc...) asparagine glycans are attached at residues N197, N206, N235, N249, N256, N336, and N351. Positions 291–356 (GGLPPSPSLA…PHPRNLSQET (66 aa)) are disordered. Over residues 330 to 339 (PSTTMPNSTA) the composition is skewed to polar residues.

The protein belongs to the EPO/TPO family. In terms of tissue distribution, found mainly in the liver, kidney and skeletal muscle.

It is found in the secreted. Lineage-specific cytokine affecting the proliferation and maturation of megakaryocytes from their committed progenitor cells. It acts at a late stage of megakaryocyte development. It may be the major physiological regulator of circulating platelets. This is Thrombopoietin (Thpo) from Mus musculus (Mouse).